A 117-amino-acid polypeptide reads, in one-letter code: uncharacterized protein (117 aa).

3 helical membrane-spanning segments follow: residues valine 32 to valine 52, valine 56 to leucine 76, and leucine 87 to phenylalanine 107.

It is found in the membrane. This is an uncharacterized protein from Saccharomyces cerevisiae (strain ATCC 204508 / S288c) (Baker's yeast).